We begin with the raw amino-acid sequence, 200 residues long: Holliday junction branch migration complex subunit RuvA (200 aa).

The segment at 1–65 (MYEYIKGTLT…ETEHVLYGFS (65 aa)) is domain I. Residues 66 to 144 (SRAEKECFRL…TLMPLYLEEP (79 aa)) are domain II. Residues 145–149 (VVPSS) form a flexible linker region. The segment at 150-200 (TANSSFKEGIGALMNLGFSRLAADRMMTEAVKELSEEASVAELLPIALRKS) is domain III.

It belongs to the RuvA family. Homotetramer. Forms an RuvA(8)-RuvB(12)-Holliday junction (HJ) complex. HJ DNA is sandwiched between 2 RuvA tetramers; dsDNA enters through RuvA and exits via RuvB. An RuvB hexamer assembles on each DNA strand where it exits the tetramer. Each RuvB hexamer is contacted by two RuvA subunits (via domain III) on 2 adjacent RuvB subunits; this complex drives branch migration. In the full resolvosome a probable DNA-RuvA(4)-RuvB(12)-RuvC(2) complex forms which resolves the HJ.

It is found in the cytoplasm. The RuvA-RuvB-RuvC complex processes Holliday junction (HJ) DNA during genetic recombination and DNA repair, while the RuvA-RuvB complex plays an important role in the rescue of blocked DNA replication forks via replication fork reversal (RFR). RuvA specifically binds to HJ cruciform DNA, conferring on it an open structure. The RuvB hexamer acts as an ATP-dependent pump, pulling dsDNA into and through the RuvAB complex. HJ branch migration allows RuvC to scan DNA until it finds its consensus sequence, where it cleaves and resolves the cruciform DNA. This chain is Holliday junction branch migration complex subunit RuvA, found in Chlamydia trachomatis serovar A (strain ATCC VR-571B / DSM 19440 / HAR-13).